The chain runs to 492 residues: Probable cytochrome P450 310a1 (492 aa).

Cys428 is a heme binding site.

Belongs to the cytochrome P450 family. Heme serves as cofactor.

Its subcellular location is the endoplasmic reticulum membrane. The protein resides in the microsome membrane. May be involved in the metabolism of insect hormones and in the breakdown of synthetic insecticides. The protein is Probable cytochrome P450 310a1 (Cyp310a1) of Drosophila melanogaster (Fruit fly).